An 84-amino-acid chain; its full sequence is MSWMFYSFIVFTLAIKEVIAIDGLEICSNDQLHVTIYSIFSPLFDKPKLNYYFNCSCPGSIYISDVYPKYFNDIAHIEYRCKLT.

A signal peptide spans 1–16 (MSWMFYSFIVFTLAIK).

This sequence belongs to the scoloptoxin-11 family. Post-translationally, contains 2 disulfide bonds. In terms of tissue distribution, expressed by the venom gland.

Its subcellular location is the secreted. In terms of biological role, inhibits voltage-gated potassium channel currents in DRG neurons. 200 nM of the toxin inhibits current amplitude by only 25% and even at concentrations up to 5 uM, the toxin does not inhibit all potassium currents. In vivo, insects injected with this toxin showed signs of neurotoxicity including twitching, paralysis, and body contraction. This Scolopendra mutilans (Chinese red-headed centipede) protein is Kappa-scoloptoxin(11)-Ssm3a.